Reading from the N-terminus, the 210-residue chain is Putative 3-methyladenine DNA glycosylase (210 aa).

The protein belongs to the DNA glycosylase MPG family.

This Lactobacillus helveticus (strain DPC 4571) protein is Putative 3-methyladenine DNA glycosylase.